The following is a 249-amino-acid chain: General transcription factor IIF subunit 2 (249 aa).

The residue at position 2 (alanine 2) is an N-acetylalanine. Residues lysine 22, lysine 33, and lysine 137 each carry the N6-acetyllysine modification. At serine 142 the chain carries Phosphoserine. Positions 227 and 229 each coordinate DNA. A Phosphoserine modification is found at serine 248.

The protein belongs to the TFIIF beta subunit family. As to quaternary structure, heterodimer of an alpha and a beta subunit. Interacts with HTATSF1 and URI1. Interacts with GPBP1. Interacts with GTF2B (via N-terminus); this interaction is inhibited in presence of GTF2F1. Part of TBP-based Pol II pre-initiation complex (PIC), in which Pol II core assembles with general transcription factors and other specific initiation factors including GTF2E1, GTF2E2, GTF2F1, GTF2F2, TCEA1, ERCC2, ERCC3, GTF2H2, GTF2H3, GTF2H4, GTF2H5, GTF2A1, GTF2A2, GTF2B and TBP; this large multi-subunit PIC complex mediates DNA unwinding and targets Pol II core to the transcription start site where the first phosphodiester bond forms.

It localises to the nucleus. In terms of biological role, TFIIF is a general transcription initiation factor that binds to RNA polymerase II and helps to recruit it to the initiation complex in collaboration with TFIIB. In Mus musculus (Mouse), this protein is General transcription factor IIF subunit 2 (Gtf2f2).